The chain runs to 238 residues: Ubiquinone/menaquinone biosynthesis C-methyltransferase UbiE (238 aa).

2 residues coordinate S-adenosyl-L-methionine: Thr62 and Asp82.

Belongs to the class I-like SAM-binding methyltransferase superfamily. MenG/UbiE family.

It carries out the reaction a 2-demethylmenaquinol + S-adenosyl-L-methionine = a menaquinol + S-adenosyl-L-homocysteine + H(+). The enzyme catalyses a 2-methoxy-6-(all-trans-polyprenyl)benzene-1,4-diol + S-adenosyl-L-methionine = a 5-methoxy-2-methyl-3-(all-trans-polyprenyl)benzene-1,4-diol + S-adenosyl-L-homocysteine + H(+). It participates in quinol/quinone metabolism; menaquinone biosynthesis; menaquinol from 1,4-dihydroxy-2-naphthoate: step 2/2. It functions in the pathway cofactor biosynthesis; ubiquinone biosynthesis. Its function is as follows. Methyltransferase required for the conversion of demethylmenaquinol (DMKH2) to menaquinol (MKH2) and the conversion of 2-polyprenyl-6-methoxy-1,4-benzoquinol (DDMQH2) to 2-polyprenyl-3-methyl-6-methoxy-1,4-benzoquinol (DMQH2). The protein is Ubiquinone/menaquinone biosynthesis C-methyltransferase UbiE of Wolbachia pipientis wMel.